A 328-amino-acid chain; its full sequence is Phosphatidylglycerol--prolipoprotein diacylglyceryl transferase (328 aa).

The next 3 membrane-spanning stretches (helical) occupy residues 15-35 (VIQG…ILIS), 57-77 (IFMF…STLV), and 106-126 (GMAI…TINT). Arg156 is an a 1,2-diacyl-sn-glycero-3-phospho-(1'-sn-glycerol) binding site. The next 2 membrane-spanning stretches (helical) occupy residues 242-262 (GFIF…IEYL) and 289-309 (ISMG…WIIV).

This sequence belongs to the Lgt family.

The protein localises to the cell inner membrane. It carries out the reaction L-cysteinyl-[prolipoprotein] + a 1,2-diacyl-sn-glycero-3-phospho-(1'-sn-glycerol) = an S-1,2-diacyl-sn-glyceryl-L-cysteinyl-[prolipoprotein] + sn-glycerol 1-phosphate + H(+). It functions in the pathway protein modification; lipoprotein biosynthesis (diacylglyceryl transfer). Catalyzes the transfer of the diacylglyceryl group from phosphatidylglycerol to the sulfhydryl group of the N-terminal cysteine of a prolipoprotein, the first step in the formation of mature lipoproteins. The chain is Phosphatidylglycerol--prolipoprotein diacylglyceryl transferase from Borreliella burgdorferi (strain ZS7) (Borrelia burgdorferi).